The primary structure comprises 244 residues: Fumarate reductase iron-sulfur subunit (244 aa).

An a menaquinone-binding site is contributed by Y14. Positions P16 to F97 constitute a 2Fe-2S ferredoxin-type domain. Residues C58, C63, C66, and C78 each contribute to the [2Fe-2S] cluster site. Positions M140 to I169 constitute a 4Fe-4S ferredoxin-type domain. The [4Fe-4S] cluster site is built by C149, C152, and C155. [3Fe-4S] cluster contacts are provided by C159, C205, and C211. C215 contributes to the [4Fe-4S] cluster binding site. Q226–K229 contacts a menaquinone.

It belongs to the succinate dehydrogenase/fumarate reductase iron-sulfur protein family. As to quaternary structure, fumarate dehydrogenase forms part of an enzyme complex containing four subunits: a flavoprotein, an iron-sulfur, and two hydrophobic anchor proteins. [2Fe-2S] cluster serves as cofactor. The cofactor is [3Fe-4S] cluster. Requires [4Fe-4S] cluster as cofactor.

Its subcellular location is the cell inner membrane. It carries out the reaction a quinone + succinate = fumarate + a quinol. It catalyses the reaction a menaquinone + succinate = a menaquinol + fumarate. Two distinct, membrane-bound, FAD-containing enzymes are responsible for the catalysis of fumarate and succinate interconversion; the fumarate reductase is used in anaerobic growth, and the succinate dehydrogenase is used in aerobic growth. The chain is Fumarate reductase iron-sulfur subunit (frdB) from Escherichia coli O157:H7.